Consider the following 338-residue polypeptide: Selenocysteine methyltransferase (338 aa).

A Hcy-binding domain is found at 1–327 (MSSPLITDFL…DTIRGIYKIL (327 aa)). Zn(2+)-binding residues include cysteine 245, cysteine 312, and cysteine 313.

Monomer. Zn(2+) is required as a cofactor. In terms of tissue distribution, present in all tissues tested.

The enzyme catalyses S-methyl-L-methionine + L-selenocysteine = Se-methyl-L-selenocysteine + L-methionine + H(+). Catalyzes the methylation of selenocysteine with S-methylmethionine as donor. Does not methylate cysteine. This chain is Selenocysteine methyltransferase (SMTA), found in Astragalus bisulcatus (Two-grooved milkvetch).